The primary structure comprises 104 residues: L-rhamnose mutarotase (104 aa).

Tyr18 contacts substrate. The active-site Proton donor is the His22. Substrate contacts are provided by residues Tyr41 and 76 to 77; that span reads WW.

Belongs to the rhamnose mutarotase family. In terms of assembly, homodimer.

Its subcellular location is the cytoplasm. It catalyses the reaction alpha-L-rhamnose = beta-L-rhamnose. It participates in carbohydrate metabolism; L-rhamnose metabolism. In terms of biological role, involved in the anomeric conversion of L-rhamnose. The chain is L-rhamnose mutarotase from Escherichia fergusonii (strain ATCC 35469 / DSM 13698 / CCUG 18766 / IAM 14443 / JCM 21226 / LMG 7866 / NBRC 102419 / NCTC 12128 / CDC 0568-73).